Consider the following 118-residue polypeptide: T cell receptor gamma variable 3 (118 aa).

Positions 1 to 17 (MRWALLVLLAFLSPASQ) are cleaved as a signal peptide. The 101-residue stretch at 18-118 (KSSNLEGRTK…GVYYCATWDR (101 aa)) folds into the Ig-like domain. A disulfide bond links Cys-41 and Cys-113. The N-linked (GlcNAc...) asparagine glycan is linked to Asn-106.

As to quaternary structure, gamma-delta TR is a heterodimer composed of a gamma and delta chain; disulfide-linked. The gamma-delta TR is associated with the transmembrane signaling CD3 coreceptor proteins following the stoichiometry: a single gamma-delta TR heterodimer associates with one CD3D-CD3E heterodimer, one CD3G-CD3E heterodimer and one CD247 homodimer forming a stable octameric structure. Upon activation, gamma-delta TR complex associates with FCER1G to initiate intracellular signaling.

The protein localises to the cell membrane. V region of the variable domain of T cell receptor (TR) gamma chain that participates in the antigen recognition. Gamma-delta TRs recognize a variety of self and foreign non-peptide antigens frequently expressed at the epithelial boundaries between the host and external environment, including endogenous lipids presented by MH-like protein CD1D and phosphoantigens presented by butyrophilin-like molecule BTN3A1. Upon antigen recognition induces rapid, innate-like immune responses involved in pathogen clearance and tissue repair. Binding of gamma-delta TR complex to antigen triggers phosphorylation of immunoreceptor tyrosine-based activation motifs (ITAMs) in the CD3 chains by the LCK and FYN kinases, allowing the recruitment, phosphorylation, and activation of ZAP70 that facilitates phosphorylation of the scaffolding proteins LCP2 and LAT. This lead to the formation of a supramolecular signalosome that recruits the phospholipase PLCG1, resulting in calcium mobilization and ERK activation, ultimately leading to T cell expansion and differentiation into effector cells. Gamma-delta TRs are produced through somatic rearrangement of a limited repertoire of variable (V), diversity (D), and joining (J) genes. The potential diversity of gamma-delta TRs is conferred by the unique ability to rearrange (D) genes in tandem and to utilize all three reading frames. The combinatorial diversity is considerably increased by the sequence exonuclease trimming and random nucleotide (N) region additions which occur during the V-(D)-J rearrangements. The sequence is that of T cell receptor gamma variable 3 from Homo sapiens (Human).